The sequence spans 266 residues: MKLKSFGVFGNPIKHSKSPLIHNACFLTFQKELGFLGHYHPILLPLESRIKNEFLHLGLSGANVTLPFKERAFQICDKIKGIALECASVNTLVLENDELVGYNTDALGFYLSLKHQNYQNDQNALILGAGGSAKALACGLQKQGLKVSVLNRSARGLDFFQRLGCDCFMEPPKSAFDLIINATSASLHNELPLNKEVLKGYFKESKLAYDLAYGFLTPFLSLAKELKIPFQDGKDMLIYQASLSFEKFSDSQIPYSKAFEVMRSVF.

Residues 16 to 18 (SKS) and T65 contribute to the shikimate site. K69 acts as the Proton acceptor in catalysis. Residues N90 and D105 each coordinate shikimate. Residues 128-132 (GAGGS) and L211 each bind NADP(+). Shikimate is bound at residue Y213. G233 serves as a coordination point for NADP(+).

Belongs to the shikimate dehydrogenase family. Homodimer.

It catalyses the reaction shikimate + NADP(+) = 3-dehydroshikimate + NADPH + H(+). It participates in metabolic intermediate biosynthesis; chorismate biosynthesis; chorismate from D-erythrose 4-phosphate and phosphoenolpyruvate: step 4/7. Functionally, involved in the biosynthesis of the chorismate, which leads to the biosynthesis of aromatic amino acids. Catalyzes the reversible NADPH linked reduction of 3-dehydroshikimate (DHSA) to yield shikimate (SA). This chain is Shikimate dehydrogenase (NADP(+)), found in Helicobacter pylori (strain J99 / ATCC 700824) (Campylobacter pylori J99).